Reading from the N-terminus, the 370-residue chain is DNA replication and repair protein RecF (370 aa).

30–37 (GQNGMGKT) is an ATP binding site.

Belongs to the RecF family.

Its subcellular location is the cytoplasm. The RecF protein is involved in DNA metabolism; it is required for DNA replication and normal SOS inducibility. RecF binds preferentially to single-stranded, linear DNA. It also seems to bind ATP. The protein is DNA replication and repair protein RecF of Bacteroides fragilis (strain YCH46).